Reading from the N-terminus, the 236-residue chain is Phosphoribosylformylglycinamidine synthase subunit PurQ (236 aa).

In terms of domain architecture, Glutamine amidotransferase type-1 spans 3–234 (FGVIVFPGSN…VDWWERGERL (232 aa)). The active-site Nucleophile is cysteine 86. Residues histidine 203 and glutamate 205 contribute to the active site.

As to quaternary structure, part of the FGAM synthase complex composed of 1 PurL, 1 PurQ and 2 PurS subunits.

The protein resides in the cytoplasm. The enzyme catalyses N(2)-formyl-N(1)-(5-phospho-beta-D-ribosyl)glycinamide + L-glutamine + ATP + H2O = 2-formamido-N(1)-(5-O-phospho-beta-D-ribosyl)acetamidine + L-glutamate + ADP + phosphate + H(+). It catalyses the reaction L-glutamine + H2O = L-glutamate + NH4(+). It functions in the pathway purine metabolism; IMP biosynthesis via de novo pathway; 5-amino-1-(5-phospho-D-ribosyl)imidazole from N(2)-formyl-N(1)-(5-phospho-D-ribosyl)glycinamide: step 1/2. Its function is as follows. Part of the phosphoribosylformylglycinamidine synthase complex involved in the purines biosynthetic pathway. Catalyzes the ATP-dependent conversion of formylglycinamide ribonucleotide (FGAR) and glutamine to yield formylglycinamidine ribonucleotide (FGAM) and glutamate. The FGAM synthase complex is composed of three subunits. PurQ produces an ammonia molecule by converting glutamine to glutamate. PurL transfers the ammonia molecule to FGAR to form FGAM in an ATP-dependent manner. PurS interacts with PurQ and PurL and is thought to assist in the transfer of the ammonia molecule from PurQ to PurL. The protein is Phosphoribosylformylglycinamidine synthase subunit PurQ of Moorella thermoacetica (strain ATCC 39073 / JCM 9320).